The chain runs to 349 residues: DNA replication and repair protein RecF (349 aa).

Glycine 30–threonine 37 is an ATP binding site.

The protein belongs to the RecF family.

It localises to the cytoplasm. The RecF protein is involved in DNA metabolism; it is required for DNA replication and normal SOS inducibility. RecF binds preferentially to single-stranded, linear DNA. It also seems to bind ATP. In Francisella tularensis subsp. mediasiatica (strain FSC147), this protein is DNA replication and repair protein RecF.